We begin with the raw amino-acid sequence, 354 residues long: Guanine nucleotide-binding protein G(o) subunit alpha (354 aa).

G2 carries the N-myristoyl glycine lipid modification. The S-palmitoyl cysteine moiety is linked to residue C3. Residues 32 to 354 (KDIKLLLLGA…ANNLRGCGLY (323 aa)) form the G-alpha domain. The G1 motif stretch occupies residues 35-48 (KLLLLGAGESGKST). Residues 40–47 (GAGESGKS), 176–182 (LRTRVKT), 201–205 (DVGGQ), 270–273 (NKKD), and A326 each bind GTP. Residues S47 and T182 each contribute to the Mg(2+) site. Residues 174–182 (DILRTRVKT) form a G2 motif region. Positions 197 to 206 (FKLFDVGGQR) are G3 motif. Positions 266–273 (ILFLNKKD) are G4 motif. The interval 324–329 (TCATDT) is G5 motif.

This sequence belongs to the G-alpha family. G(i/o/t/z) subfamily. G proteins are composed of 3 units; alpha, beta and gamma. The alpha chain contains the guanine nucleotide binding site. Interacts (in GDP-bound form) with gpr-1; gpr-1 forms a complex with gpr-2 and lin-5. Interacts (in GDP-bound form) with gpb-1. Interacts (in GDP-bound form) with gbas-1 (via GBA motif); the interaction leads to activation of goa-1. In terms of tissue distribution, expressed in the ASER neuron and the intestine.

Guanine nucleotide-binding proteins (G proteins) are involved as modulators or transducers in various transmembrane signaling systems. In the 1-cell embryo, probably together with gpa-16, controls nuclear rotation and spindle elongation during mitosis. During the first embryonic cell divisions, plays a role in gpr-1/2 cortical localization and in the proper orientation of EMS blastomere mitotic spindle. Polarity determinants (par genes) may regulate lin-5/gpr-1/gpr-2/goa-1 locally to create the asymmetric forces that drive spindle movement. Involved in chemosensory responses to attractive and repellent odors detected by AWC and AWB sensory neurons, respectively. In ASER neurons, acts downstream of glr-3 to regulate cold avoidance behavior via calcium signaling, and it may also play a role in sensing cold in the intestine. Negatively regulates axon regeneration after injury downstream of the inhibitory compound arachidonoyl ethanolamide (AEA) by antagonizing the activation of the JNK pathway (mlk-1/mek-1/kgb-1). In neurons, may negatively regulate diacylglycerol (DAG) production mediated by egl-30 signaling cascade and thereby negatively regulates acetylcholine release. Couples to the muscarinic acetylcholine receptor gar-2 to negatively regulate cholinergic receptor activity in the presence of high levels of acetylcholine in ventral cord motor neurons. Plays a role in the navigational capacity of sperm and the targeting of sperm derived from males to the fertilization site in the uterus of hermaphrodites. Involved in egg-laying and in regulating dopamine-mediated locomotion. Most likely couples to the dopamine receptors dop-2 and dop-3 to positively regulate the dopamine-mediated suppression of crh-1/CREB1 transcription factor activation in cholinergic SIA neurons in the presence of food. This is Guanine nucleotide-binding protein G(o) subunit alpha from Caenorhabditis elegans.